A 365-amino-acid chain; its full sequence is Glutamate 5-kinase 1 (365 aa).

ATP is bound at residue lysine 9. Substrate-binding residues include serine 49, aspartate 136, and asparagine 148. Residues threonine 168–aspartate 169 and threonine 210–lysine 216 contribute to the ATP site. A PUA domain is found at serine 276–glutamate 353.

This sequence belongs to the glutamate 5-kinase family.

Its subcellular location is the cytoplasm. The enzyme catalyses L-glutamate + ATP = L-glutamyl 5-phosphate + ADP. The protein operates within amino-acid biosynthesis; L-proline biosynthesis; L-glutamate 5-semialdehyde from L-glutamate: step 1/2. Functionally, catalyzes the transfer of a phosphate group to glutamate to form L-glutamate 5-phosphate. This Bacillus licheniformis (strain ATCC 14580 / DSM 13 / JCM 2505 / CCUG 7422 / NBRC 12200 / NCIMB 9375 / NCTC 10341 / NRRL NRS-1264 / Gibson 46) protein is Glutamate 5-kinase 1.